An 89-amino-acid polypeptide reads, in one-letter code: MTLDTAEKQKLIESHQVHATDTGSVEVQVAMLSERISKLSDHLQGNIHDYASRQGLLKMIGKRKRLLSYIKGKNPQNYQDLIKKIGIRG.

The protein belongs to the universal ribosomal protein uS15 family. In terms of assembly, part of the 30S ribosomal subunit. Forms a bridge to the 50S subunit in the 70S ribosome, contacting the 23S rRNA.

In terms of biological role, one of the primary rRNA binding proteins, it binds directly to 16S rRNA where it helps nucleate assembly of the platform of the 30S subunit by binding and bridging several RNA helices of the 16S rRNA. Its function is as follows. Forms an intersubunit bridge (bridge B4) with the 23S rRNA of the 50S subunit in the ribosome. This chain is Small ribosomal subunit protein uS15, found in Prochlorococcus marinus subsp. pastoris (strain CCMP1986 / NIES-2087 / MED4).